The primary structure comprises 653 residues: Polyadenylate-binding protein, cytoplasmic and nuclear (653 aa).

Positions M1 to A10 are enriched in basic and acidic residues. The segment at M1 to P77 is disordered. Polar residues predominate over residues D17–S27. Residues A53–S68 are compositionally biased toward low complexity. The region spanning A80–R158 is the RRM 1 domain. The residue at position 167 (T167) is a Phosphothreonine. 3 consecutive RRM domains span residues G168–S245, T261–K338, and V364–R441. In terms of domain architecture, PABC spans P569–D646.

It belongs to the polyadenylate-binding protein type-1 family. Interacts with cid13.

The protein resides in the cytoplasm. It localises to the nucleus. Binds the poly(A) tail of mRNA. Appears to be an important mediator of the multiple roles of the poly(A) tail in mRNA biogenesis, stability and translation. In the nucleus, involved in both mRNA cleavage and polyadenylation. Is also required for efficient mRNA export to the cytoplasm. Acts in concert with a poly(A)-specific nuclease (PAN) to affect poly(A) tail shortening, which may occur concomitantly with either nucleocytoplasmic mRNA transport or translational initiation. In the cytoplasm, stimulates translation initiation and regulates mRNA decay through translation termination-coupled poly(A) shortening, probably mediated by PAN. This Schizosaccharomyces pombe (strain 972 / ATCC 24843) (Fission yeast) protein is Polyadenylate-binding protein, cytoplasmic and nuclear (pab1).